Here is a 140-residue protein sequence, read N- to C-terminus: Putative nickel-responsive regulator 2 (140 aa).

The Ni(2+) site is built by histidine 81, histidine 92, histidine 94, and cysteine 100.

Belongs to the transcriptional regulatory CopG/NikR family. Ni(2+) serves as cofactor.

Its function is as follows. Transcriptional regulator. This Methanosarcina acetivorans (strain ATCC 35395 / DSM 2834 / JCM 12185 / C2A) protein is Putative nickel-responsive regulator 2.